A 135-amino-acid polypeptide reads, in one-letter code: Flagellar assembly factor FliW 1 (135 aa).

It belongs to the FliW family. In terms of assembly, interacts with translational regulator CsrA and flagellin(s).

Its subcellular location is the cytoplasm. In terms of biological role, acts as an anti-CsrA protein, binds CsrA and prevents it from repressing translation of its target genes, one of which is flagellin. Binds to flagellin and participates in the assembly of the flagellum. The polypeptide is Flagellar assembly factor FliW 1 (Helicobacter pylori (strain HPAG1)).